The primary structure comprises 439 residues: Xaa-Pro dipeptidase (439 aa).

Mn(2+) is bound by residues Asp244, Asp255, His335, Glu380, and Glu418.

The protein belongs to the peptidase M24B family. Bacterial-type prolidase subfamily. The cofactor is Mn(2+).

It carries out the reaction Xaa-L-Pro dipeptide + H2O = an L-alpha-amino acid + L-proline. In terms of biological role, splits dipeptides with a prolyl residue in the C-terminal position. The chain is Xaa-Pro dipeptidase from Shewanella frigidimarina (strain NCIMB 400).